Here is a 99-residue protein sequence, read N- to C-terminus: Transcriptional repressor PagR (99 aa).

Residues 9 to 99 form the HTH arsR-type domain; that stretch reads IEYMSLEDDA…GIIKLLNPIQ (91 aa). The H-T-H motif DNA-binding region spans 43–62; the sequence is NVTQIIQILKLPQSTVSQHL.

Represses the expression of the pagA and atxA genes. The chain is Transcriptional repressor PagR (pagR) from Bacillus anthracis.